Here is a 477-residue protein sequence, read N- to C-terminus: 3-isopropylmalate dehydratase large subunit (477 aa).

3 residues coordinate [4Fe-4S] cluster: Cys358, Cys419, and Cys422.

This sequence belongs to the aconitase/IPM isomerase family. LeuC type 1 subfamily. In terms of assembly, heterodimer of LeuC and LeuD. [4Fe-4S] cluster is required as a cofactor.

The enzyme catalyses (2R,3S)-3-isopropylmalate = (2S)-2-isopropylmalate. Its pathway is amino-acid biosynthesis; L-leucine biosynthesis; L-leucine from 3-methyl-2-oxobutanoate: step 2/4. Functionally, catalyzes the isomerization between 2-isopropylmalate and 3-isopropylmalate, via the formation of 2-isopropylmaleate. In Acinetobacter baylyi (strain ATCC 33305 / BD413 / ADP1), this protein is 3-isopropylmalate dehydratase large subunit.